A 67-amino-acid polypeptide reads, in one-letter code: Large ribosomal subunit protein bL35 (67 aa).

The span at 1 to 16 (MPKMKTKKSAAKRFRV) shows a compositional bias: basic residues. Residues 1-22 (MPKMKTKKSAAKRFRVRPGGTV) are disordered.

This sequence belongs to the bacterial ribosomal protein bL35 family.

In Methylibium petroleiphilum (strain ATCC BAA-1232 / LMG 22953 / PM1), this protein is Large ribosomal subunit protein bL35.